Consider the following 491-residue polypeptide: Polybrominated aromatic compounds synthase (491 aa).

C437 is a binding site for heme.

It belongs to the cytochrome P450 family. It depends on heme as a cofactor.

Its function is as follows. Cytochrome P450 protein involved in the biosynthesis of polybrominated aromatic organic compounds. In the presence of ferredoxin, ferredoxin reductase and NADH, catalyzes the coupling of bromophenols and bromopyrroles, forming various polybrominated biphenyls and hydroxylated polybrominated diphenyl ethers (OH-BDE). Can also mediate the heterocoupling of 3,5-dibromocatechol. Can also use chlorinated phenolic substrates. 2,3,4-tribromopyrrole could be the physiological substrate. This is Polybrominated aromatic compounds synthase from Pseudoalteromonas luteoviolacea (strain 2ta16).